The sequence spans 332 residues: tRNA U34 carboxymethyltransferase (332 aa).

Residues Lys-96, Trp-110, Lys-115, Gly-135, 186-187 (LE), Met-204, Tyr-208, and Arg-323 each bind carboxy-S-adenosyl-L-methionine.

Belongs to the class I-like SAM-binding methyltransferase superfamily. CmoB family. Homotetramer.

The enzyme catalyses carboxy-S-adenosyl-L-methionine + 5-hydroxyuridine(34) in tRNA = 5-carboxymethoxyuridine(34) in tRNA + S-adenosyl-L-homocysteine + H(+). In terms of biological role, catalyzes carboxymethyl transfer from carboxy-S-adenosyl-L-methionine (Cx-SAM) to 5-hydroxyuridine (ho5U) to form 5-carboxymethoxyuridine (cmo5U) at position 34 in tRNAs. The polypeptide is tRNA U34 carboxymethyltransferase (Hydrogenovibrio crunogenus (strain DSM 25203 / XCL-2) (Thiomicrospira crunogena)).